Reading from the N-terminus, the 668-residue chain is Golgin subfamily A member 6-like protein 1 (668 aa).

Disordered regions lie at residues 1–120, 323–356, 384–466, 481–591, and 603–639; these read MLMW…HQEA, IREQ…RQEE, EKMH…EMWR, KEKM…REQE, and EQEE…MRRQ. Basic residues predominate over residues 15–41; it reads LPTHPHLPTHPHLPTHPHLPTHPHLPT. Residues 51–72 show a composition bias toward basic and acidic residues; the sequence is MSKETRQSKLAEAKEQLTDHHP. Polar residues-rich tracts occupy residues 73–83 and 91–103; these read QTNPSVGTAAS and NNGT…TSGG. Positions 106–120 are enriched in basic and acidic residues; the sequence is SPEDEQKASHQHQEA. Residues 177 to 663 adopt a coiled-coil conformation; it reads LEQALSAVAT…EEKMQEHQEH (487 aa).

It belongs to the GOLGA6 family.

This is Golgin subfamily A member 6-like protein 1 (GOLGA6L1) from Homo sapiens (Human).